The chain runs to 241 residues: Phycocyanobilin:ferredoxin oxidoreductase (241 aa).

The protein belongs to the HY2 family.

The enzyme catalyses (2R,3Z)-phycocyanobilin + 4 oxidized [2Fe-2S]-[ferredoxin] = biliverdin IXalpha + 4 reduced [2Fe-2S]-[ferredoxin] + 4 H(+). Catalyzes the four-electron reduction of biliverdin IX-alpha (2-electron reduction at both the A and D rings); the reaction proceeds via an isolatable 2-electron intermediate, 181,182-dihydrobiliverdin. This Prochlorococcus marinus (strain MIT 9312) protein is Phycocyanobilin:ferredoxin oxidoreductase.